Reading from the N-terminus, the 314-residue chain is Periplasmic [NiFe] hydrogenase small subunit (314 aa).

Residues 1 to 49 constitute a signal peptide (tat-type signal); that stretch reads MNFSVGLGRDDAEKRLVQNGVSRRDFMKFCATVAAAMGMGPAFAPKVAE. Residues cysteine 67, cysteine 70, cysteine 164, cysteine 197, histidine 234, cysteine 237, cysteine 262, and cysteine 268 each contribute to the [4Fe-4S] cluster site. Residues cysteine 277, cysteine 295, and cysteine 298 each coordinate [3Fe-4S] cluster.

It belongs to the [NiFe]/[NiFeSe] hydrogenase small subunit family. Heterodimer of a large and a small subunit. The cofactor is [4Fe-4S] cluster. [3Fe-4S] cluster serves as cofactor. In terms of processing, predicted to be exported by the Tat system. The position of the signal peptide cleavage has been experimentally proven.

It is found in the periplasm. It carries out the reaction 2 Fe(III)-[cytochrome c3] + H2 = 2 Fe(II)-[cytochrome c3] + 2 H(+). Functionally, involved in hydrogen uptake for the anaerobic reduction of sulfate to hydrogen sulfide in an electron transport chain. Cytochrome c3 is the physiological electron acceptor. The sequence is that of Periplasmic [NiFe] hydrogenase small subunit (hydA) from Solidesulfovibrio fructosivorans (Desulfovibrio fructosivorans).